We begin with the raw amino-acid sequence, 201 residues long: Urease accessory protein UreG (201 aa).

Residue 11 to 18 (GPVGSGKT) participates in GTP binding.

The protein belongs to the SIMIBI class G3E GTPase family. UreG subfamily. Homodimer. UreD, UreF and UreG form a complex that acts as a GTP-hydrolysis-dependent molecular chaperone, activating the urease apoprotein by helping to assemble the nickel containing metallocenter of UreC. The UreE protein probably delivers the nickel.

It localises to the cytoplasm. Functionally, facilitates the functional incorporation of the urease nickel metallocenter. This process requires GTP hydrolysis, probably effectuated by UreG. The chain is Urease accessory protein UreG from Synechococcus sp. (strain CC9605).